The primary structure comprises 102 residues: Small ribosomal subunit protein uS10 (102 aa).

This sequence belongs to the universal ribosomal protein uS10 family. As to quaternary structure, part of the 30S ribosomal subunit.

Its function is as follows. Involved in the binding of tRNA to the ribosomes. The chain is Small ribosomal subunit protein uS10 from Methylobacterium radiotolerans (strain ATCC 27329 / DSM 1819 / JCM 2831 / NBRC 15690 / NCIMB 10815 / 0-1).